The chain runs to 286 residues: 4-diphosphocytidyl-2-C-methyl-D-erythritol kinase (286 aa).

Lys13 is a catalytic residue. 96 to 106 contributes to the ATP binding site; the sequence is PMGGGIGGGSS. Asp138 is a catalytic residue.

Belongs to the GHMP kinase family. IspE subfamily.

The enzyme catalyses 4-CDP-2-C-methyl-D-erythritol + ATP = 4-CDP-2-C-methyl-D-erythritol 2-phosphate + ADP + H(+). It participates in isoprenoid biosynthesis; isopentenyl diphosphate biosynthesis via DXP pathway; isopentenyl diphosphate from 1-deoxy-D-xylulose 5-phosphate: step 3/6. In terms of biological role, catalyzes the phosphorylation of the position 2 hydroxy group of 4-diphosphocytidyl-2C-methyl-D-erythritol. The chain is 4-diphosphocytidyl-2-C-methyl-D-erythritol kinase from Pseudoalteromonas atlantica (strain T6c / ATCC BAA-1087).